Here is a 150-residue protein sequence, read N- to C-terminus: Ribonuclease H (150 aa).

The RNase H type-1 domain maps to Met1–Ala146. Positions 9, 52, 74, and 138 each coordinate Mg(2+).

It belongs to the RNase H family. As to quaternary structure, monomer. Mg(2+) serves as cofactor.

It is found in the cytoplasm. The enzyme catalyses Endonucleolytic cleavage to 5'-phosphomonoester.. Endonuclease that specifically degrades the RNA of RNA-DNA hybrids. The chain is Ribonuclease H from Roseobacter denitrificans (strain ATCC 33942 / OCh 114) (Erythrobacter sp. (strain OCh 114)).